We begin with the raw amino-acid sequence, 361 residues long: Chorismate synthase (361 aa).

NADP(+) is bound by residues Arg-48 and Arg-54. Residues 125 to 127 (RSS), 238 to 239 (NA), Gly-278, 293 to 297 (KPTSS), and Arg-319 each bind FMN.

It belongs to the chorismate synthase family. In terms of assembly, homotetramer. FMNH2 is required as a cofactor.

The catalysed reaction is 5-O-(1-carboxyvinyl)-3-phosphoshikimate = chorismate + phosphate. The protein operates within metabolic intermediate biosynthesis; chorismate biosynthesis; chorismate from D-erythrose 4-phosphate and phosphoenolpyruvate: step 7/7. Catalyzes the anti-1,4-elimination of the C-3 phosphate and the C-6 proR hydrogen from 5-enolpyruvylshikimate-3-phosphate (EPSP) to yield chorismate, which is the branch point compound that serves as the starting substrate for the three terminal pathways of aromatic amino acid biosynthesis. This reaction introduces a second double bond into the aromatic ring system. The sequence is that of Chorismate synthase from Proteus mirabilis (strain HI4320).